The primary structure comprises 799 residues: RasGAP-activating-like protein 1 (799 aa).

2 consecutive C2 domains span residues 1–105 (MAKS…DSWI) and 116–231 (VQGE…NGWF). D21, D27, D74, D76, D82, D149, D155, D202, D204, and D210 together coordinate Ca(2+). One can recognise a Ras-GAP domain in the interval 316 to 544 (GLAGPFLDYL…SRVRDFLDQL (229 aa)). T400 is subject to Phosphothreonine. The PH domain occupies 565 to 672 (TIVREGFLLK…WLSALRKASA (108 aa)). The Btk-type zinc finger occupies 674 to 710 (NPGKLVACHPGAFRSGRWTCCLQAERSAAGCSRTHSA). Zn(2+) contacts are provided by H682, C693, C694, and C704.

Ca(2+) is required as a cofactor.

In terms of biological role, probable inhibitory regulator of the Ras-cyclic AMP pathway. Plays a role in dendrite formation by melanocytes. The protein is RasGAP-activating-like protein 1 of Mus musculus (Mouse).